A 432-amino-acid chain; its full sequence is Histidine--tRNA ligase (432 aa).

Belongs to the class-II aminoacyl-tRNA synthetase family. Homodimer.

The protein resides in the cytoplasm. It carries out the reaction tRNA(His) + L-histidine + ATP = L-histidyl-tRNA(His) + AMP + diphosphate + H(+). The polypeptide is Histidine--tRNA ligase (Symbiobacterium thermophilum (strain DSM 24528 / JCM 14929 / IAM 14863 / T)).